A 1049-amino-acid chain; its full sequence is Solvent-resistant pump membrane transporter SrpB (1049 aa).

Transmembrane regions (helical) follow at residues 10-30 (IFAW…LAKM), 339-359 (SVVH…YLFL), 366-386 (LIPT…LPYF), 392-412 (VLTM…AIVV), 440-460 (GALV…AFFG), 470-490 (FAIT…VFTP), 542-562 (LAFL…PKAF), 871-891 (APLL…ALYE), 895-915 (VPVS…LATL), 927-947 (VGLM…VEFA), 973-993 (ILMT…ASGA), and 1008-1028 (GMIT…VVVV).

It belongs to the resistance-nodulation-cell division (RND) (TC 2.A.6) family.

The protein localises to the cell inner membrane. The inner membrane transporter component of an organic solvent efflux pump. Involved in export of a number of low log POW compounds including hexane (log POW 3.5), toluene (log POW 2.5) and dimethylphthalate (log POW 2.3). The solvent resistance phenotype has been postulated to depend on the operon expression level. The chain is Solvent-resistant pump membrane transporter SrpB (srpB) from Pseudomonas putida (Arthrobacter siderocapsulatus).